A 360-amino-acid chain; its full sequence is CCA-adding enzyme (360 aa).

ATP contacts are provided by Gly-8 and Arg-11. 2 residues coordinate CTP: Gly-8 and Arg-11. Mg(2+) contacts are provided by Asp-21 and Asp-23. The ATP site is built by Arg-91, Arg-137, and Arg-140. CTP-binding residues include Arg-91, Arg-137, and Arg-140.

The protein belongs to the tRNA nucleotidyltransferase/poly(A) polymerase family. Bacterial CCA-adding enzyme type 2 subfamily. The cofactor is Mg(2+).

It catalyses the reaction a tRNA precursor + 2 CTP + ATP = a tRNA with a 3' CCA end + 3 diphosphate. It carries out the reaction a tRNA with a 3' CCA end + 2 CTP + ATP = a tRNA with a 3' CCACCA end + 3 diphosphate. Catalyzes the addition and repair of the essential 3'-terminal CCA sequence in tRNAs without using a nucleic acid template. Adds these three nucleotides in the order of C, C, and A to the tRNA nucleotide-73, using CTP and ATP as substrates and producing inorganic pyrophosphate. tRNA 3'-terminal CCA addition is required both for tRNA processing and repair. Also involved in tRNA surveillance by mediating tandem CCA addition to generate a CCACCA at the 3' terminus of unstable tRNAs. While stable tRNAs receive only 3'-terminal CCA, unstable tRNAs are marked with CCACCA and rapidly degraded. The protein is CCA-adding enzyme of Francisella tularensis subsp. tularensis (strain FSC 198).